The following is a 139-amino-acid chain: Large ribosomal subunit protein uL16 (139 aa).

The protein belongs to the universal ribosomal protein uL16 family. As to quaternary structure, part of the 50S ribosomal subunit.

Binds 23S rRNA and is also seen to make contacts with the A and possibly P site tRNAs. The chain is Large ribosomal subunit protein uL16 from Microcystis aeruginosa (strain NIES-843 / IAM M-2473).